Here is an 89-residue protein sequence, read N- to C-terminus: Co-chaperonin GroES (89 aa).

It belongs to the GroES chaperonin family. In terms of assembly, heptamer of 7 subunits arranged in a ring. Interacts with the chaperonin GroEL.

The protein resides in the cytoplasm. In terms of biological role, together with the chaperonin GroEL, plays an essential role in assisting protein folding. The GroEL-GroES system forms a nano-cage that allows encapsulation of the non-native substrate proteins and provides a physical environment optimized to promote and accelerate protein folding. GroES binds to the apical surface of the GroEL ring, thereby capping the opening of the GroEL channel. This Pseudothermotoga lettingae (strain ATCC BAA-301 / DSM 14385 / NBRC 107922 / TMO) (Thermotoga lettingae) protein is Co-chaperonin GroES.